Consider the following 270-residue polypeptide: Replication protein A 32 kDa subunit (270 aa).

An N-acetylmethionine modification is found at Met1. A phosphoserine; by PRKDC mark is found at Ser4 and Ser8. Phosphothreonine; by PRKDC is present on Thr21. The tract at residues 22–41 is disordered; the sequence is QSPGGFGSPTPSQAEKKSRA. A Phosphoserine; by CDK2 modification is found at Ser23. Residue Ser29 is modified to Phosphoserine; by CDK1. A Phosphoserine; by PRKDC modification is found at Ser33. Glycyl lysine isopeptide (Lys-Gly) (interchain with G-Cter in ubiquitin) cross-links involve residues Lys37 and Lys38. Positions 74–148 form a DNA-binding region, OB; that stretch reads VTIVGIIRHA…KSLVAFKIIP (75 aa). The segment at 187-270 is interaction with RAD52, TIPIN, UNG and XPA; it reads GMGEPGNFSG…DDHFKSTDAE (84 aa).

Belongs to the replication factor A protein 2 family. Component of the replication protein A complex (RPA/RP-A), a heterotrimeric complex composed of RPA1, RPA2 and RPA3. Interacts with PRPF19; the PRP19-CDC5L complex is recruited to the sites of DNA repair where it ubiquitinates the replication protein A complex (RPA). Interacts with SERTAD3. Interacts with TIPIN. Interacts with TIMELESS. Interacts with PPP4R2; the interaction is direct, DNA damage-dependent and mediates the recruitment of the PP4 catalytic subunit PPP4C. Interacts (hyperphosphorylated) with RAD51. Interacts with SMARCAL1; the interaction is direct and mediates the recruitment to the RPA complex of SMARCAL1. Interacts with RAD52 and XPA; those interactions are direct and associate RAD52 and XPA to the RPA complex. Interacts with FBH1. Interacts with ETAA1; the interaction is direct and promotes ETAA1 recruitment at stalled replication forks. Interacts with DDI2. Interacts (in unphosphorylated form via N-terminus) with EIF4EBP3; the interaction enhances EIF4EBP3-mediated inhibition of EIF4E-mediated mRNA nuclear export. Interacts with nuclear UNG (isoform 2); this interaction mediates UNG recruitment to RPA-coated single-stranded DNA at stalled replication forks. In terms of processing, differentially phosphorylated throughout the cell cycle, becoming phosphorylated at the G1-S transition and dephosphorylated in late mitosis. Mainly phosphorylated at Ser-23 and Ser-29, by cyclin A-CDK2 and cyclin B-CDK1, respectively during DNA replication and mitosis. Dephosphorylation may require the serine/threonine-protein phosphatase 4. Phosphorylation at Ser-23 and Ser-29 is a prerequisite for further phosphorylation. Becomes hyperphosphorylated on additional residues including Ser-4, Ser-8, Thr-21 and Ser-33 in response to DNA damage. Hyperphosphorylation is mediated by ATM, ATR and PRKDC. Primarily recruited to DNA repair nuclear foci as a hypophosphorylated form it undergoes subsequent hyperphosphorylation, catalyzed by ATR. Hyperphosphorylation is required for RAD51 recruitment to chromatin and efficient DNA repair. Phosphorylation at Thr-21 depends upon RFWD3 presence. Post-translationally, DNA damage-induced 'Lys-63'-linked polyubiquitination by PRPF19 mediates ATRIP recruitment to the RPA complex at sites of DNA damage and activation of ATR. Ubiquitinated by RFWD3 at stalled replication forks in response to DNA damage: ubiquitination by RFWD3 does not lead to degradation by the proteasome and promotes removal of the RPA complex from stalled replication forks, promoting homologous recombination.

Its subcellular location is the nucleus. The protein localises to the PML body. As part of the heterotrimeric replication protein A complex (RPA/RP-A), binds and stabilizes single-stranded DNA intermediates, that form during DNA replication or upon DNA stress. It prevents their reannealing and in parallel, recruits and activates different proteins and complexes involved in DNA metabolism. Thereby, it plays an essential role both in DNA replication and the cellular response to DNA damage. In the cellular response to DNA damage, the RPA complex controls DNA repair and DNA damage checkpoint activation. Through recruitment of ATRIP activates the ATR kinase a master regulator of the DNA damage response. It is required for the recruitment of the DNA double-strand break repair factors RAD51 and RAD52 to chromatin in response to DNA damage. Also recruits to sites of DNA damage proteins like XPA and XPG that are involved in nucleotide excision repair and is required for this mechanism of DNA repair. Also plays a role in base excision repair (BER) probably through interaction with UNG. Also recruits SMARCAL1/HARP, which is involved in replication fork restart, to sites of DNA damage. May also play a role in telomere maintenance. The protein is Replication protein A 32 kDa subunit (Rpa2) of Rattus norvegicus (Rat).